The chain runs to 361 residues: Replication-associated protein (361 aa).

Positions 8–116 constitute a CRESS-DNA virus Rep endonuclease domain; sequence RINAKNYFLT…DGDVLDHGVF (109 aa). The short motif at 15 to 18 is the RCR-1 element; it reads FLTY. Residues E49, H57, and H59 each contribute to the a divalent metal cation site. The RCR-2 motif lies at 57-59; that stretch reads HLH. Residue Y103 is the For DNA cleavage activity of the active site. Residues 103-106 carry the RCR-3 motif; that stretch reads YMEK. A divalent metal cation is bound at residue D107. The binding to RBR1 stretch occupies residues 143-153; the sequence is KASALNILREK. The interval 156–176 is oligomerization; the sequence is KDFVLQFHNLNSNLDRIFTPP. 221 to 228 lines the ATP pocket; sequence GDSRTGKT.

The protein belongs to the geminiviridae Rep protein family. Homooligomer. Interacts with the replication enhancer protein (REn). Interacts with host retinoblastoma-related protein 1 (RBR1), and may thereby induce the transcription of host replicative enzymes even if the cell is not dividing anymore. Interacts with host PCNA. Interacts with host SCE1 protein. It depends on Mg(2+) as a cofactor. The cofactor is Mn(2+).

The protein localises to the host nucleus. Its function is as follows. Essential for the replication of viral ssDNA. The closed circular ssDNA genome is first converted to a superhelical dsDNA. Rep binds a specific region at the genome origin of replication. It introduces an endonucleolytic nick within the conserved sequence 5'-TAATATTAC-3' in the intergenic region of the genome present in all geminiviruses, thereby initiating the rolling circle replication (RCR). Following cleavage, binds covalently to the 5'-phosphate of DNA as a tyrosyl ester. The cleavage gives rise to a free 3'-OH that serves as a primer for the cellular DNA polymerase. The polymerase synthesizes the (+) strand DNA by rolling circle mechanism. After one round of replication, a Rep-catalyzed nucleotidyl transfer reaction releases a circular single-stranded virus genome, thereby terminating the replication. Displays origin-specific DNA cleavage, nucleotidyl transferase, ATPase and helicase activities. The chain is Replication-associated protein from Tomato yellow leaf curl China virus (TYLCCNV).